A 470-amino-acid chain; its full sequence is Cell division protein FtsA (470 aa).

Residues 416–470 (NKKDTHENEVESTDEEIYQSEDNHQEHKQNHEHVQDKDKDKEESKFKKLMKSLFE) form a disordered region. Positions 425 to 434 (VESTDEEIYQ) are enriched in acidic residues. Over residues 436-461 (EDNHQEHKQNHEHVQDKDKDKEESKF) the composition is skewed to basic and acidic residues.

It belongs to the FtsA/MreB family. In terms of assembly, self-interacts. Interacts with FtsZ.

It localises to the cell membrane. In terms of biological role, cell division protein that is involved in the assembly of the Z ring. May serve as a membrane anchor for the Z ring. The protein is Cell division protein FtsA of Staphylococcus aureus (strain NCTC 8325 / PS 47).